A 235-amino-acid polypeptide reads, in one-letter code: Large ribosomal subunit protein uL1 (235 aa).

This sequence belongs to the universal ribosomal protein uL1 family. As to quaternary structure, part of the 50S ribosomal subunit.

Binds directly to 23S rRNA. The L1 stalk is quite mobile in the ribosome, and is involved in E site tRNA release. Its function is as follows. Protein L1 is also a translational repressor protein, it controls the translation of the L11 operon by binding to its mRNA. This is Large ribosomal subunit protein uL1 from Prochlorococcus marinus (strain MIT 9301).